A 237-amino-acid chain; its full sequence is Octopine transport system permease protein OccQ (237 aa).

Residues 22 to 222 (TGMTVAVASS…LITFISGQAF (201 aa)) form the ABC transmembrane type-1 domain. The next 4 helical transmembrane spans lie at 24–44 (MTVA…CLGA), 72–92 (LVIY…GSLF), 96–116 (GFVS…VSAA), and 201–221 (FSFY…SGQA).

It belongs to the binding-protein-dependent transport system permease family. HisMQ subfamily.

The protein resides in the cell inner membrane. Its function is as follows. Component of the octopine active transport system probably consisting of four subunits: Q, M, P and T. The protein is Octopine transport system permease protein OccQ (occQ) of Rhizobium meliloti (Ensifer meliloti).